The following is a 183-amino-acid chain: ATP-dependent protease subunit HslV (183 aa).

T2 is a catalytic residue. The Na(+) site is built by A157, C160, and T163.

It belongs to the peptidase T1B family. HslV subfamily. In terms of assembly, a double ring-shaped homohexamer of HslV is capped on each side by a ring-shaped HslU homohexamer. The assembly of the HslU/HslV complex is dependent on binding of ATP.

It localises to the cytoplasm. It carries out the reaction ATP-dependent cleavage of peptide bonds with broad specificity.. Its activity is regulated as follows. Allosterically activated by HslU binding. In terms of biological role, protease subunit of a proteasome-like degradation complex believed to be a general protein degrading machinery. The polypeptide is ATP-dependent protease subunit HslV (Marinomonas sp. (strain MWYL1)).